A 488-amino-acid polypeptide reads, in one-letter code: Photosystem II CP43 reaction center protein (488 aa).

A propeptide spanning residues M1–E29 is cleaved from the precursor. 5 helical membrane passes run L84–A108, L149–N170, K193–S215, K270–S290, and W306–A327. E382 contributes to the [CaMn4O5] cluster binding site. The helical transmembrane segment at R462–P486 threads the bilayer.

Belongs to the PsbB/PsbC family. PsbC subfamily. As to quaternary structure, PSII is composed of 1 copy each of membrane proteins PsbA, PsbB, PsbC, PsbD, PsbE, PsbF, PsbH, PsbI, PsbJ, PsbK, PsbL, PsbM, PsbT, PsbX, PsbY, PsbZ, Psb30/Ycf12, at least 3 peripheral proteins of the oxygen-evolving complex and a large number of cofactors. It forms dimeric complexes. Binds multiple chlorophylls and provides some of the ligands for the Ca-4Mn-5O cluster of the oxygen-evolving complex. It may also provide a ligand for a Cl- that is required for oxygen evolution. PSII binds additional chlorophylls, carotenoids and specific lipids. is required as a cofactor.

It is found in the plastid. It localises to the chloroplast thylakoid membrane. Functionally, one of the components of the core complex of photosystem II (PSII). It binds chlorophyll and helps catalyze the primary light-induced photochemical processes of PSII. PSII is a light-driven water:plastoquinone oxidoreductase, using light energy to abstract electrons from H(2)O, generating O(2) and a proton gradient subsequently used for ATP formation. The chain is Photosystem II CP43 reaction center protein from Pyropia yezoensis (Susabi-nori).